The primary structure comprises 350 residues: MGAGASAEEKHSRELEKKLKEDAEKDARTVKLLLLGAGESGKSTIVKQMKIIHQDGYSLEECLEFIAIIYGNTLQSILAIVRAMTTLNIQYGDSARQDDARKLMHMADTIEEGTMPKEMSDIIQRLWKDSGIQACFDRASEYQLNDSAGYYLSDLERLVTPGYVPTEQDVLRSRVKTTGIIETQFSFKDLNFRMFDVGGQRSERKKWIHCFEGVTCIIFIAALSAYDMVLVEDDEVNRMHESLHLFNSICNHRYFATTSIVLFLNKKDVFSEKIKKAHLSICFPDYNGPNTYEDAGNYIKVQFLELNMRRDVKEIYSHMTCATDTQNVKFVFDAVTDIIIKENLKDCGLF.

The tract at residues 1–21 is disordered; it reads MGAGASAEEKHSRELEKKLKE. The N-myristoyl glycine moiety is linked to residue Gly2. Residues 7–21 are compositionally biased toward basic and acidic residues; sequence AEEKHSRELEKKLKE. Residues 28–350 form the G-alpha domain; sequence RTVKLLLLGA…KENLKDCGLF (323 aa). The interval 31–44 is G1 motif; it reads KLLLLGAGESGKST. 36–43 contacts GTP; it reads GAGESGKS. Ser43 contributes to the Mg(2+) binding site. Position 142 is a phosphotyrosine (Tyr142). Residues Asp146, 171-177, Gly199, 265-268, and Ala322 contribute to the GTP site; these read LRSRVKT and NKKD. Positions 169–177 are G2 motif; the sequence is DVLRSRVKT. Position 177 (Thr177) interacts with Mg(2+). Residues 192-201 form a G3 motif region; that stretch reads FRMFDVGGQR. Residues 261-268 form a G4 motif region; it reads VLFLNKKD. The tract at residues 320-325 is G5 motif; sequence TCATDT. An interaction with RHO region spans residues 340–350; it reads IKENLKDCGLF.

As to quaternary structure, heterotrimeric G proteins are composed of 3 subunits alpha, beta and gamma. The alpha chain contains the guanine nucleotide binding site. Interacts with RHO. Interacts with RGS9 and PDE6G. Interacts (when myristoylated) with UNC119; interaction is required for localization in sensory neurons. As to expression, rod.

Its subcellular location is the cell projection. The protein resides in the cilium. It localises to the photoreceptor outer segment. It is found in the membrane. The protein localises to the photoreceptor inner segment. Its function is as follows. Functions as a signal transducer for the rod photoreceptor RHO. Required for normal RHO-mediated light perception by the retina. Guanine nucleotide-binding proteins (G proteins) function as transducers downstream of G protein-coupled receptors (GPCRs), such as the photoreceptor RHO. The alpha chain contains the guanine nucleotide binding site and alternates between an active, GTP-bound state and an inactive, GDP-bound state. Activated RHO promotes GDP release and GTP binding. Signaling is mediated via downstream effector proteins, such as cGMP-phosphodiesterase. In Bos taurus (Bovine), this protein is Guanine nucleotide-binding protein G(t) subunit alpha-1 (GNAT1).